Here is a 1901-residue protein sequence, read N- to C-terminus: A-kinase anchor protein 11 (1901 aa).

Phosphoserine occurs at positions 18, 422, 433, 444, and 448. The interval 407–443 (ALPANVRKPTPRKPESPYGNLCDAPDSPRPVKASRED) is disordered. 2 disordered regions span residues 843–864 (NPGN…SSSK) and 971–993 (LPVS…DSQN). Phosphothreonine occurs at positions 981 and 1100. The interval 1131–1153 (EFAPATPPSTPHNSSVGSLSENE) is disordered. Positions 1141-1153 (PHNSSVGSLSENE) are enriched in polar residues. Residues Ser1171, Ser1176, Ser1177, Ser1242, and Ser1337 each carry the phosphoserine modification. Position 1485 is a phosphothreonine (Thr1485). Phosphoserine is present on Ser1580. The PKA-RII subunit binding domain stretch occupies residues 1650–1663 (LAEKIVAEAIEKAE). The tract at residues 1708–1805 (KEIEDFQSTE…HEDEVEGLGQ (98 aa)) is disordered. Residues 1713-1740 (FQSTESVSSQQMNLSIGDDSTGSWSNLS) show a composition bias toward polar residues. Positions 1747–1756 (DESSSFHHLS) are enriched in basic and acidic residues. Positions 1757 to 1772 (ESNGNSSSWSSLGLEG) are enriched in low complexity. The segment covering 1787-1801 (DGPDDKDEEHEDEVE) has biased composition (acidic residues).

Belongs to the AKAP110 family. Expressed in heart, brain, lung, liver, kidney, testis and ovary. Weakly expressed in skeletal muscle, pancreas and spleen.

It localises to the cytoplasm. The protein localises to the cytoskeleton. It is found in the microtubule organizing center. The protein resides in the centrosome. Binds to type II regulatory subunits of protein kinase A and anchors/targets them. This is A-kinase anchor protein 11 (AKAP11) from Homo sapiens (Human).